An 808-amino-acid chain; its full sequence is MVKETLIPPSSTSMTTGTSSSSSLSMTLSSTNALSFLSKGWREVWDSADADLQLMRDRANSVKNLASTFDREIENFLNNSARSAFPVGSPSASSFSNEIGIMKKLQPKISEFRRVYSAPEISRKVMERWGPARAKLGMDLSAIKKAIVSEMELDERQGVLEMSRLRRRRNSDRVRFTEFFAEAERDGEAYFGDWEPIRSLKSRFKEFEKRSSLEILSGFKNSEFVEKLKTSFKSIYKETDEAKDVPPLDVPELLACLVRQSEPFLDQIGVRKDTCDRIVESLCKCKSQQLWRLPSAQASDLIENDNHGVDLDMRIASVLQSTGHHYDGGFWTDFVKPETPENKRHVAIVTTASLPWMTGTAVNPLFRAAYLAKAAKQSVTLVVPWLCESDQELVYPNNLTFSSPEEQESYIRKWLEERIGFKADFKISFYPGKFSKERRSIFPAGDTSQFISSKDADIAILEEPEHLNWYYHGKRWTDKFNHVVGIVHTNYLEYIKREKNGALQAFFVNHVNNWVTRAYCDKVLRLSAATQDLPKSVVCNVHGVNPKFLMIGEKIAEERSRGEQAFSKGAYFLGKMVWAKGYRELIDLMAKHKSELGSFNLDVYGNGEDAVEVQRAAKKHDLNLNFLKGRDHADDALHKYKVFINPSISDVLCTATAEALAMGKFVVCADHPSNEFFRSFPNCLTYKTSEDFVSKVQEAMTKEPLPLTPEQMYNLSWEAATQRFMEYSDLDKILNNGEGGRKMRKSRSVPSFNEVVDGGLAFSHYVLTGNDFLRLCTGATPRTKDYDNQHCKDLNLVPPHVHKPIFGW.

Residues 1–23 (MVKETLIPPSSTSMTTGTSSSSS) form a disordered region. The transit peptide at 1–58 (MVKETLIPPSSTSMTTGTSSSSSLSMTLSSTNALSFLSKGWREVWDSADADLQLMRDR) directs the protein to the chloroplast. Residues 10–23 (SSTSMTTGTSSSSS) show a composition bias toward low complexity.

This sequence belongs to the glycosyltransferase group 1 family. Glycosyltransferase 4 subfamily.

It is found in the plastid. Its subcellular location is the chloroplast outer membrane. It catalyses the reaction a 1,2-diacyl-3-O-(beta-D-galactosyl)-sn-glycerol + UDP-alpha-D-galactose = a 1,2-diacyl-3-O-[alpha-D-galactosyl-(1-&gt;6)-beta-D-galactosyl]-sn-glycerol + UDP + H(+). Involved in the synthesis of diacylglycerol galactolipids that are specifically found in thylakoid membranes. Specific for alpha-glycosidic linkages. Responsible for the final assembly of galactolipids in photosynthetic membranes. Digalactosyldiacylglycerol (DGDG) provides stability to the photosystem I (PSI) complex, especially to the PsaA, PsaB, PsaC, PsaL and PsaH subunits. The chain is Digalactosyldiacylglycerol synthase 1, chloroplastic from Arabidopsis thaliana (Mouse-ear cress).